The following is a 245-amino-acid chain: MKIDLNADLGEGCANDQALLQLVSSANIACGFHAGDAQTMRQSVRWALEYGVAIGAHPSFPDRENFGRTAMQLPPETVYAQVVYQLGALAAIVQVEGGVMQHVKPHGMLYNQAAVDPLLADAIAQAVKAVDPSLRLVGLAGSELIRAGTRVGLVTRQEVFADRHYQPDGTLVPRSQPDALIESDELALSQTLAMVQQHQVQACDGSWVQVQADTVCVHGDGVQALAFARCLRDRFQQEGISVIAQ.

The protein belongs to the LamB/PxpA family. In terms of assembly, forms a complex composed of PxpA, PxpB and PxpC.

It carries out the reaction 5-oxo-L-proline + ATP + 2 H2O = L-glutamate + ADP + phosphate + H(+). Catalyzes the cleavage of 5-oxoproline to form L-glutamate coupled to the hydrolysis of ATP to ADP and inorganic phosphate. The protein is 5-oxoprolinase subunit A of Yersinia pseudotuberculosis serotype O:1b (strain IP 31758).